Reading from the N-terminus, the 305-residue chain is Sulfate adenylyltransferase subunit 2 (305 aa).

It belongs to the PAPS reductase family. CysD subfamily. In terms of assembly, heterodimer composed of CysD, the smaller subunit, and CysN.

It carries out the reaction sulfate + ATP + H(+) = adenosine 5'-phosphosulfate + diphosphate. Its pathway is sulfur metabolism; hydrogen sulfide biosynthesis; sulfite from sulfate: step 1/3. Functionally, with CysN forms the ATP sulfurylase (ATPS) that catalyzes the adenylation of sulfate producing adenosine 5'-phosphosulfate (APS) and diphosphate, the first enzymatic step in sulfur assimilation pathway. APS synthesis involves the formation of a high-energy phosphoric-sulfuric acid anhydride bond driven by GTP hydrolysis by CysN coupled to ATP hydrolysis by CysD. This is Sulfate adenylyltransferase subunit 2 from Azotobacter vinelandii (strain DJ / ATCC BAA-1303).